A 147-amino-acid chain; its full sequence is Globin, polymeric component P3 (147 aa).

Positions 2–146 constitute a Globin domain; the sequence is HLTADQVAAL…ISDALIAGLE (145 aa). His-96 is a heme b binding site.

This sequence belongs to the globin family. Polymer.

This Glycera dibranchiata (Bloodworm) protein is Globin, polymeric component P3.